A 350-amino-acid polypeptide reads, in one-letter code: N-acetyl-gamma-glutamyl-phosphate reductase (350 aa).

The active site involves cysteine 153.

The protein belongs to the NAGSA dehydrogenase family. Type 1 subfamily.

The protein localises to the cytoplasm. The catalysed reaction is N-acetyl-L-glutamate 5-semialdehyde + phosphate + NADP(+) = N-acetyl-L-glutamyl 5-phosphate + NADPH + H(+). Its pathway is amino-acid biosynthesis; L-arginine biosynthesis; N(2)-acetyl-L-ornithine from L-glutamate: step 3/4. Catalyzes the NADPH-dependent reduction of N-acetyl-5-glutamyl phosphate to yield N-acetyl-L-glutamate 5-semialdehyde. This Thermosynechococcus vestitus (strain NIES-2133 / IAM M-273 / BP-1) protein is N-acetyl-gamma-glutamyl-phosphate reductase.